The sequence spans 237 residues: NADPH-dependent FMN reductase ArsH (237 aa).

FMN is bound by residues 39 to 46 (SNRECSYS) and 102 to 107 (SPERHG).

It belongs to the ArsH family. As to quaternary structure, homotetramer. FMN is required as a cofactor.

Functionally, has NADPH-dependent FMN reductase activity and high NADPH-dependent ferric reductase activity with highest activity for Fe(3+) as substrate. No activity with NADH, iron trichloride, Cu(2+) or Ag(+). May be involved in cytosolic ferric iron assimilation as an NADPH-dependent ferric reductase in vivo. In Acidithiobacillus ferrooxidans (strain ATCC 23270 / DSM 14882 / CIP 104768 / NCIMB 8455) (Ferrobacillus ferrooxidans (strain ATCC 23270)), this protein is NADPH-dependent FMN reductase ArsH.